We begin with the raw amino-acid sequence, 106 residues long: Nucleoid-associated protein DIP0260 (106 aa).

It belongs to the YbaB/EbfC family. As to quaternary structure, homodimer.

It is found in the cytoplasm. Its subcellular location is the nucleoid. Functionally, binds to DNA and alters its conformation. May be involved in regulation of gene expression, nucleoid organization and DNA protection. The polypeptide is Nucleoid-associated protein DIP0260 (Corynebacterium diphtheriae (strain ATCC 700971 / NCTC 13129 / Biotype gravis)).